The chain runs to 121 residues: Secretin (121 aa).

Residues 1-18 (MAPRPLLLLLLLLGGSAA) form the signal peptide. A propeptide spanning residues 19–26 (RPAPPRAR) is cleaved from the precursor. Position 54 is a valine amide (V54). Position 58 is a phosphoserine (S58). The propeptide occupies 58 to 121 (SEQDAENSMA…AAAEGTLRPR (64 aa)).

It belongs to the glucagon family.

It localises to the secreted. In terms of biological role, hormone involved in different processes, such as regulation of the pH of the duodenal content, food intake and water homeostasis. Exerts its biological effects by binding to secretin receptor (SCTR), a G-protein coupled receptor expressed in the basolateral domain of several cells. Acts as a key gastrointestinal hormone by regulating the pH of the duodenal content. Secreted by S cells of the duodenum in the crypts of Lieberkuehn and regulates the pH of the duodenum by (1) inhibiting the secretion of gastric acid from the parietal cells of the stomach and (2) stimulating the production of bicarbonate (NaHCO(3)) from the ductal cells of the pancreas. Production of bicarbonate is essential to neutralize the pH and ensure no damage is done to the small intestine by the gastric acid. In addition to regulating the pH of the duodenal content, plays a central role in diet induced thermogenesis: acts as a non-sympathetic brown fat (BAT) activator mediating prandial thermogenesis, which consequentially induces satiation. Mechanistically, secretin released by the gut after a meal binds to secretin receptor (SCTR) in brown adipocytes, activating brown fat thermogenesis by stimulating lipolysis, which is sensed in the brain and promotes satiation. Also able to stimulate lipolysis in white adipocytes. Also plays an important role in cellular osmoregulation: released into the systemic circulation in response to hyperosmolality and acts at different levels in the hypothalamus, pituitary and kidney to regulate water homeostasis. Also plays a role in the central nervous system, possibly by acting as a neuropeptide hormone: required for hippocampal synaptic function and neural progenitor cells maintenance. In Homo sapiens (Human), this protein is Secretin.